Reading from the N-terminus, the 265-residue chain is tRNA pseudouridine synthase A (265 aa).

The active-site Nucleophile is the Asp-52. Tyr-110 lines the substrate pocket. A disordered region spans residues 244–265; it reads FYRDGPPARTPGGTTDAEEDEG.

It belongs to the tRNA pseudouridine synthase TruA family. In terms of assembly, homodimer.

The enzyme catalyses uridine(38/39/40) in tRNA = pseudouridine(38/39/40) in tRNA. Its function is as follows. Formation of pseudouridine at positions 38, 39 and 40 in the anticodon stem and loop of transfer RNAs. The sequence is that of tRNA pseudouridine synthase A from Myxococcus xanthus.